Here is a 203-residue protein sequence, read N- to C-terminus: ATP-dependent Clp protease proteolytic subunit 1 (203 aa).

The active-site Nucleophile is serine 102. Histidine 127 is an active-site residue.

This sequence belongs to the peptidase S14 family. Fourteen ClpP subunits assemble into 2 heptameric rings which stack back to back to give a disk-like structure with a central cavity, resembling the structure of eukaryotic proteasomes.

Its subcellular location is the cytoplasm. The enzyme catalyses Hydrolysis of proteins to small peptides in the presence of ATP and magnesium. alpha-casein is the usual test substrate. In the absence of ATP, only oligopeptides shorter than five residues are hydrolyzed (such as succinyl-Leu-Tyr-|-NHMec, and Leu-Tyr-Leu-|-Tyr-Trp, in which cleavage of the -Tyr-|-Leu- and -Tyr-|-Trp bonds also occurs).. Its function is as follows. Cleaves peptides in various proteins in a process that requires ATP hydrolysis. Has a chymotrypsin-like activity. Plays a major role in the degradation of misfolded proteins. This Rhizobium johnstonii (strain DSM 114642 / LMG 32736 / 3841) (Rhizobium leguminosarum bv. viciae) protein is ATP-dependent Clp protease proteolytic subunit 1.